Here is a 25-residue protein sequence, read N- to C-terminus: Grammistin Pp 3 (25 aa).

Belongs to the grammistin family. Group 3 subfamily. In terms of assembly, exists as aggregates of 3-4 molecules. Expressed by the skin glands.

It localises to the secreted. Thanks to its abundant amphiphilic alpha-helices, it may integrate into membrane phospholipids, leading to lysis of the membrane. Has hemolytic activity. Has antibacterial activity with a broad spectrum against various species of bacteria including both Gram-positive and Gram-negative groups. Also has ichthyotoxic activity. This chain is Grammistin Pp 3, found in Pogonoperca punctata (Clown grouper).